A 303-amino-acid polypeptide reads, in one-letter code: Vacuolar protein sorting-associated protein 26B (303 aa).

Belongs to the VPS26 family. Component of the retromer complex which consists of VPS29 (MAG1), VPS26 (VPS26A or VPS26B), VPS35 (VPS35A or VPS35B or VPS35C), VPS5/17 (SNX1 or SNX2A or SNX2B). Component of a retromer subcomplex consisting of VPS29 (MAG1), VPS26 (VPS26A or VPS26B), VPS35 (VPS35A or VPS35B or VPS35C).

The protein resides in the cytoplasm. It localises to the endosome membrane. The protein localises to the prevacuolar compartment membrane. It is found in the golgi apparatus. Its subcellular location is the trans-Golgi network membrane. Its function is as follows. Plays a role in vesicular protein sorting. Component of the membrane-associated retromer complex which is essential in endosome-to-Golgi retrograde transport. The VPS29-VPS26-VPS35 subcomplex may be involved in recycling of specific cargos from endosome to the plasma membrane. The protein is Vacuolar protein sorting-associated protein 26B (VPS26B) of Arabidopsis thaliana (Mouse-ear cress).